A 201-amino-acid polypeptide reads, in one-letter code: Glycerol-3-phosphate acyltransferase (201 aa).

5 helical membrane-spanning segments follow: residues 5–25 (LLGA…FGVV), 55–75 (KMGV…ILVA), 88–108 (WVTA…WLGF), 118–138 (LGIF…GYAV), and 164–184 (TYGP…LIFL).

Belongs to the PlsY family. As to quaternary structure, probably interacts with PlsX.

The protein localises to the cell inner membrane. It carries out the reaction an acyl phosphate + sn-glycerol 3-phosphate = a 1-acyl-sn-glycero-3-phosphate + phosphate. It participates in lipid metabolism; phospholipid metabolism. Functionally, catalyzes the transfer of an acyl group from acyl-phosphate (acyl-PO(4)) to glycerol-3-phosphate (G3P) to form lysophosphatidic acid (LPA). This enzyme utilizes acyl-phosphate as fatty acyl donor, but not acyl-CoA or acyl-ACP. In Anaeromyxobacter sp. (strain K), this protein is Glycerol-3-phosphate acyltransferase.